A 129-amino-acid polypeptide reads, in one-letter code: MINVQTVLKVADNSGAVFVSCIRLLNSSSRVGAGVGDTITVVVKKSIIKKNIKKSKEVKKGQVCSAVILRTIKGVKRWGNFFLRSSSNSVALINKYCLPIGSRLLGPVFREIRVNLKFSKIISIAQVTL.

The protein belongs to the universal ribosomal protein uL14 family.

The protein resides in the mitochondrion. The chain is Large ribosomal subunit protein uL14m (RPL14) from Acanthamoeba castellanii (Amoeba).